We begin with the raw amino-acid sequence, 547 residues long: Membrane transporter D1 (547 aa).

Over 1–2 the chain is Cytoplasmic; sequence MR. A helical membrane pass occupies residues 3–25; it reads ASVMLCAALGGFLFGYDTGVINA. Residues 26–43 are Extracellular-facing; the sequence is ALFQMKDHFGFSEHSWQY. Residues 44–64 form a helical membrane-spanning segment; it reads ALIVAIAIAGAFVGAFISGFI. The Cytoplasmic portion of the chain corresponds to 65–78; it reads SAAFGRRPCIAVAD. The helical transmembrane segment at 79–99 threads the bilayer; that stretch reads ALFVIGSVLMGAAPNVEVVLV. Residues 100–101 lie on the Extracellular side of the membrane; that stretch reads SR. A helical transmembrane segment spans residues 102–122; that stretch reads VIVGLAIGISSATIPVYLAEV. Residues 123–136 lie on the Cytoplasmic side of the membrane; it reads TSPKHRGATIVLNN. The chain crosses the membrane as a helical span at residues 137-157; it reads LFLTGGQFVAAGFTAIMVVFT. Residues 158–164 lie on the Extracellular side of the membrane; sequence SKNIGWR. A helical transmembrane segment spans residues 165–185; it reads VAIGIGALPAVVQAFCLLFFL. Topologically, residues 186–245 are cytoplasmic; it reads PESPRWLLSKGHADRAKAVADKFEVDLCEFQEGDELPSVRIDYRPLMARDMRFRVVLSSG. The helical transmembrane segment at 246–266 threads the bilayer; that stretch reads LQIIQQFSGINTIMYYSSVIL. At 267-276 the chain is on the extracellular side; sequence YDAGFRDAIM. The chain crosses the membrane as a helical span at residues 277–297; the sequence is PVVLSIPLAFMNALFTAVAIF. Residues 298–308 are Cytoplasmic-facing; that stretch reads TVDRFGRRRML. Residues 309 to 329 traverse the membrane as a helical segment; it reads LISVFGCLVLLVVIAIIGFFI. The Extracellular segment spans residues 330-339; the sequence is GTRISYSVGG. A helical membrane pass occupies residues 340 to 360; the sequence is GLFLALLAVFLALYAPGIGCI. Residues 361-385 are Cytoplasmic-facing; that stretch reads PWVIMGEIFPTHLRTSAASVATMAN. The helical transmembrane segment at 386 to 406 threads the bilayer; that stretch reads WGANVLVSQVFPILMGAIGVG. Residue glycine 407 is a topological domain, extracellular. The helical transmembrane segment at 408–428 threads the bilayer; the sequence is TFTIISGLMALGCIFVYFFAV. Over 429-547 the chain is Cytoplasmic; it reads ETKGLTLEQI…AIKAAPHEPK (119 aa). 2 disordered regions span residues 449 to 468 and 510 to 547; these read PPRF…YRED and VSNK…HEPK. The segment covering 519–529 has biased composition (polar residues); the sequence is TSSSSDPQSLE.

This sequence belongs to the major facilitator superfamily. Sugar transporter (TC 2.A.1.1) family.

Its subcellular location is the membrane. The sequence is that of Membrane transporter D1 from Leishmania donovani.